A 122-amino-acid polypeptide reads, in one-letter code: Urease subunit beta (122 aa).

A disordered region spans residues 92 to 122; the sequence is GLRPEYAGELDGRGHEPTAPNYGEKGQGHFE.

Belongs to the urease beta subunit family. Heterotrimer of UreA (gamma), UreB (beta) and UreC (alpha) subunits. Three heterotrimers associate to form the active enzyme.

It localises to the cytoplasm. It carries out the reaction urea + 2 H2O + H(+) = hydrogencarbonate + 2 NH4(+). Its pathway is nitrogen metabolism; urea degradation; CO(2) and NH(3) from urea (urease route): step 1/1. In Saccharopolyspora erythraea (strain ATCC 11635 / DSM 40517 / JCM 4748 / NBRC 13426 / NCIMB 8594 / NRRL 2338), this protein is Urease subunit beta.